A 208-amino-acid chain; its full sequence is V-type proton ATPase subunit E (208 aa).

The protein belongs to the V-ATPase E subunit family.

Its function is as follows. Produces ATP from ADP in the presence of a proton gradient across the membrane. This chain is V-type proton ATPase subunit E, found in Chlamydia trachomatis serovar L2 (strain ATCC VR-902B / DSM 19102 / 434/Bu).